The primary structure comprises 439 residues: Skin secretory protein xP2 (439 aa).

The N-terminal stretch at 1 to 22 is a signal peptide; it reads MNHKLFCVHFLLLILSVCYIQG. Residues 25-351 form a disordered region; that stretch reads AGGEPAPAEG…VEVGPKTEDC (327 aa). A run of 5 repeats spans residues 26–33, 34–41, 42–51, 52–59, and 60–69. Residues 26 to 343 are 33 X approximate repeats of G-G(0,1)-[EV](0,1)-A-P-[A-P](1,3)-A-E; the sequence is GGEPAPAEGV…APAPAPAPVE (318 aa). Residues 26–345 show a composition bias toward low complexity; the sequence is GGEPAPAEGV…APAPAPVEVG (320 aa). The 6; approximate repeat unit spans residues 70–77; the sequence is GAEPAPAD. A run of 9 repeats spans residues 78–87, 88–97, 98–107, 108–115, 116–125, 126–135, 136–145, 146–153, and 154–163. The 16; approximate repeat unit spans residues 164 to 173; it reads VEAPAPAPAE. Repeat copies occupy residues 174–183, 184–193, 194–203, 204–215, 216–225, 226–235, 236–245, 246–255, 256–265, 266–275, 276–285, 286–293, 294–303, and 304–313. A 31; approximate repeat occupies 314–321; sequence GGAPSPAE. A 32; approximate repeat occupies 322 to 331; the sequence is GGAPAAAPAE. The stretch at 332-343 is one 33; approximate repeat; sequence GGAPAPAPAPVE. 2 P-type domains span residues 349–392 and 396–439; these read EDCK…FFPR and AQCL…FHQK. 6 disulfides stabilise this stretch: C351–C377, C361–C376, C371–C388, C398–C424, C408–C423, and C418–C435.

In terms of tissue distribution, skin.

It localises to the secreted. Functionally, may act as a growth factor in the germinal layer of the epidermis. May also be involved in growth of regenerating glands and in protection of the skin from the external environment. This is Skin secretory protein xP2 (p2) from Xenopus laevis (African clawed frog).